The chain runs to 488 residues: Bifunctional protein GlmU (488 aa).

The pyrophosphorylase stretch occupies residues 1-237 (MPRTRTPLAA…VEEASGVNDR (237 aa)). UDP-N-acetyl-alpha-D-glucosamine is bound by residues 13-16 (LAAG), K27, Q82, 87-88 (GT), 110-112 (SGD), G149, E164, N179, and N235. D112 contacts Mg(2+). N235 lines the Mg(2+) pocket. Positions 238–258 (VELSRANRVMVGRLAEAFMRA) are linker. The N-acetyltransferase stretch occupies residues 259–488 (GVTIEDPARF…KGRPAARRAS (230 aa)). 2 residues coordinate UDP-N-acetyl-alpha-D-glucosamine: R341 and K359. H371 functions as the Proton acceptor in the catalytic mechanism. 2 residues coordinate UDP-N-acetyl-alpha-D-glucosamine: Y374 and N385. Acetyl-CoA is bound by residues A388, 394–395 (NY), S413, A431, and R448. Residues 459–488 (AQRQAEKQMKGTATGPASARKGRPAARRAS) are disordered. The segment covering 478 to 488 (RKGRPAARRAS) has biased composition (basic residues).

It in the N-terminal section; belongs to the N-acetylglucosamine-1-phosphate uridyltransferase family. In the C-terminal section; belongs to the transferase hexapeptide repeat family. As to quaternary structure, homotrimer. Requires Mg(2+) as cofactor.

It localises to the cytoplasm. It catalyses the reaction alpha-D-glucosamine 1-phosphate + acetyl-CoA = N-acetyl-alpha-D-glucosamine 1-phosphate + CoA + H(+). It carries out the reaction N-acetyl-alpha-D-glucosamine 1-phosphate + UTP + H(+) = UDP-N-acetyl-alpha-D-glucosamine + diphosphate. Its pathway is nucleotide-sugar biosynthesis; UDP-N-acetyl-alpha-D-glucosamine biosynthesis; N-acetyl-alpha-D-glucosamine 1-phosphate from alpha-D-glucosamine 6-phosphate (route II): step 2/2. It functions in the pathway nucleotide-sugar biosynthesis; UDP-N-acetyl-alpha-D-glucosamine biosynthesis; UDP-N-acetyl-alpha-D-glucosamine from N-acetyl-alpha-D-glucosamine 1-phosphate: step 1/1. It participates in bacterial outer membrane biogenesis; LPS lipid A biosynthesis. Functionally, catalyzes the last two sequential reactions in the de novo biosynthetic pathway for UDP-N-acetylglucosamine (UDP-GlcNAc). The C-terminal domain catalyzes the transfer of acetyl group from acetyl coenzyme A to glucosamine-1-phosphate (GlcN-1-P) to produce N-acetylglucosamine-1-phosphate (GlcNAc-1-P), which is converted into UDP-GlcNAc by the transfer of uridine 5-monophosphate (from uridine 5-triphosphate), a reaction catalyzed by the N-terminal domain. In Anaeromyxobacter sp. (strain K), this protein is Bifunctional protein GlmU.